Here is a 497-residue protein sequence, read N- to C-terminus: Guanosine-5'-triphosphate,3'-diphosphate pyrophosphatase (497 aa).

This sequence belongs to the GppA/Ppx family. GppA subfamily.

It catalyses the reaction guanosine 3'-diphosphate 5'-triphosphate + H2O = guanosine 3',5'-bis(diphosphate) + phosphate + H(+). It participates in purine metabolism; ppGpp biosynthesis; ppGpp from GTP: step 2/2. Catalyzes the conversion of pppGpp to ppGpp. Guanosine pentaphosphate (pppGpp) is a cytoplasmic signaling molecule which together with ppGpp controls the 'stringent response', an adaptive process that allows bacteria to respond to amino acid starvation, resulting in the coordinated regulation of numerous cellular activities. This Pseudoalteromonas translucida (strain TAC 125) protein is Guanosine-5'-triphosphate,3'-diphosphate pyrophosphatase.